Here is a 272-residue protein sequence, read N- to C-terminus: Alkaline ceramidase (272 aa).

2 helical membrane-spanning segments follow: residues 34–54 (FANT…IMLL) and 61–81 (VNGG…ASTY). Histidine 83 lines the Zn(2+) pocket. 4 helical membrane-spanning segments follow: residues 96–116 (LSLV…MKWF), 124–144 (LTLV…LCFL), 148–168 (LNAI…NYEG), and 183–203 (ILAL…LCDF). Residues histidine 213 and histidine 217 each coordinate Zn(2+). Residues 214–234 (ALFHLLAGLAGYTIFIMFSMI) traverse the membrane as a helical segment. Asparagine 256 carries N-linked (GlcNAc...) asparagine glycosylation.

It belongs to the alkaline ceramidase family. Requires Zn(2+) as cofactor.

Its subcellular location is the membrane. It carries out the reaction an N-acyl-sphingoid base + H2O = a sphingoid base + a fatty acid. The enzyme catalyses an N-acylsphing-4-enine + H2O = sphing-4-enine + a fatty acid. It catalyses the reaction an N-acyl-15-methylhexadecasphing-4-enine + H2O = 15-methylhexadecasphing-4-enine + a fatty acid. It functions in the pathway lipid metabolism; sphingolipid metabolism. In terms of biological role, hydrolyzes the sphingolipid ceramide into sphingoid base and free fatty acid. C.elegans contain specific sphingoid bases, which are unique or different in structure compared to the sphingoid bases found in other animals. Two examples of these distinctive compounds are: 15-methylhexadecasphinganine and 15-methylhexadecasphing-4-enine. The protein is Alkaline ceramidase of Caenorhabditis elegans.